A 180-amino-acid polypeptide reads, in one-letter code: ADP-ribosylation factor 1 (180 aa).

Residue glycine 2 is the site of N-myristoyl glycine attachment. GTP is bound by residues 24–31 (GLDAAGKT), 67–71 (DVGGQ), and 126–129 (NKQD).

The protein belongs to the small GTPase superfamily. Arf family.

The protein localises to the golgi apparatus. The catalysed reaction is GTP + H2O = GDP + phosphate + H(+). Functionally, GTP-binding protein involved in protein trafficking; may modulate vesicle budding and uncoating within the Golgi apparatus. In Schizosaccharomyces pombe (strain 972 / ATCC 24843) (Fission yeast), this protein is ADP-ribosylation factor 1 (arf1).